A 260-amino-acid polypeptide reads, in one-letter code: MLTFVGLGLYDEASVTVAGRDAIAAADRVFAEFYTSRLIGTDVAALEAHHDTTIERRDRAGVEQHPEPILDAAADGDAVFLTAGDTMISTTHVDLRMRAADRGIDTRVIHAPTAASAAAGLTGLQNYRFGKATTLPFPWAHGADGVPGSVTDTIEANRERGLHTLVYLDIKVDHPRVDGDAYMTASQAADLLATNWDADALGVVVARAGAPDATVRADRLGALADADFGSPLHLLVVPGSLHHIERDALRELAGAPADAL.

Residues Leu9, Asp85, Ile88, 113–114 (TA), Leu168, Ala208, and His233 contribute to the S-adenosyl-L-methionine site.

The protein belongs to the diphthine synthase family. In terms of assembly, homodimer.

The catalysed reaction is 2-[(3S)-amino-3-carboxypropyl]-L-histidyl-[translation elongation factor 2] + 3 S-adenosyl-L-methionine = diphthine-[translation elongation factor 2] + 3 S-adenosyl-L-homocysteine + 3 H(+). It functions in the pathway protein modification; peptidyl-diphthamide biosynthesis. Its function is as follows. S-adenosyl-L-methionine-dependent methyltransferase that catalyzes the trimethylation of the amino group of the modified target histidine residue in translation elongation factor 2 (EF-2), to form an intermediate called diphthine. The three successive methylation reactions represent the second step of diphthamide biosynthesis. This is Diphthine synthase from Halobacterium salinarum (strain ATCC 29341 / DSM 671 / R1).